The following is a 229-amino-acid chain: Leucyl/phenylalanyl-tRNA--protein transferase (229 aa).

This sequence belongs to the L/F-transferase family.

It localises to the cytoplasm. It carries out the reaction N-terminal L-lysyl-[protein] + L-leucyl-tRNA(Leu) = N-terminal L-leucyl-L-lysyl-[protein] + tRNA(Leu) + H(+). The enzyme catalyses N-terminal L-arginyl-[protein] + L-leucyl-tRNA(Leu) = N-terminal L-leucyl-L-arginyl-[protein] + tRNA(Leu) + H(+). The catalysed reaction is L-phenylalanyl-tRNA(Phe) + an N-terminal L-alpha-aminoacyl-[protein] = an N-terminal L-phenylalanyl-L-alpha-aminoacyl-[protein] + tRNA(Phe). Its function is as follows. Functions in the N-end rule pathway of protein degradation where it conjugates Leu, Phe and, less efficiently, Met from aminoacyl-tRNAs to the N-termini of proteins containing an N-terminal arginine or lysine. The protein is Leucyl/phenylalanyl-tRNA--protein transferase of Desulforapulum autotrophicum (strain ATCC 43914 / DSM 3382 / VKM B-1955 / HRM2) (Desulfobacterium autotrophicum).